Consider the following 2053-residue polypeptide: Nonribosomal peptide synthetase pboA (2053 aa).

The interval 16 to 402 is adenylation 1; the sequence is ACRDNADRPA…GRRDRVAKVR (387 aa). Residues 503-579 enclose the Carrier 1 domain; that stretch reads RSYASVDEVI…HLITVCRERR (77 aa). S540 carries the O-(pantetheine 4'-phosphoryl)serine modification. The interval 611–896 is condensation 1; that stretch reads NDPSLYCVKH…LLQSVHRTVQ (286 aa). The interval 1034–1418 is adenylation 2; it reads SAAARNPTNI…GRRDRQVKLR (385 aa). The 79-residue stretch at 1515–1593 folds into the Carrier 2 domain; that stretch reads VPDTSVKKII…DIVALVEGKI (79 aa). S1553 bears the O-(pantetheine 4'-phosphoryl)serine mark. The interval 1630–1981 is condensation 2; sequence NSQCQSGFNV…LQLRLEYDSD (352 aa).

The protein belongs to the NRP synthetase family. Pantetheine 4'-phosphate is required as a cofactor.

It functions in the pathway secondary metabolite biosynthesis. Its function is as follows. Nonribosomal peptide synthetase; part of the gene cluster that mediates the biosynthesis of protubonine B, a hydroxylated and diacetylated cyclo-L-Trp-L-Leu derivative. The first step of the protubonine B synthesis is performed by the nonribosomal peptide synthetase pboA that catalyzes the formation of cyclo-L-Trp-L-Leu by condensing L-Leu with L-Trp. The flavin-dependent monooxygenase pboD is responsible for hydroxylation at C-3 of the indole ring and subsequent formation of the pyrrolidine ring, leadind to protubonine D. Protubonine D is further diacetylated by two acetyltransferases, pboB and pboC, to form the final product protubonine B via protubonine C. This Aspergillus ustus protein is Nonribosomal peptide synthetase pboA.